We begin with the raw amino-acid sequence, 122 residues long: Large ribosomal subunit protein uL22 (122 aa).

The protein belongs to the universal ribosomal protein uL22 family. As to quaternary structure, part of the 50S ribosomal subunit.

In terms of biological role, this protein binds specifically to 23S rRNA; its binding is stimulated by other ribosomal proteins, e.g. L4, L17, and L20. It is important during the early stages of 50S assembly. It makes multiple contacts with different domains of the 23S rRNA in the assembled 50S subunit and ribosome. Its function is as follows. The globular domain of the protein is located near the polypeptide exit tunnel on the outside of the subunit, while an extended beta-hairpin is found that lines the wall of the exit tunnel in the center of the 70S ribosome. This chain is Large ribosomal subunit protein uL22, found in Caldicellulosiruptor saccharolyticus (strain ATCC 43494 / DSM 8903 / Tp8T 6331).